Here is a 75-residue protein sequence, read N- to C-terminus: Putative membrane protein insertion efficiency factor (75 aa).

The protein belongs to the UPF0161 family.

The protein localises to the cell membrane. In terms of biological role, could be involved in insertion of integral membrane proteins into the membrane. This chain is Putative membrane protein insertion efficiency factor, found in Bacillus velezensis (strain DSM 23117 / BGSC 10A6 / LMG 26770 / FZB42) (Bacillus amyloliquefaciens subsp. plantarum).